The primary structure comprises 169 residues: Cell division inhibitor SulA (169 aa).

The tract at residues 106 to 112 is ftsZ binding; it reads ALRTGNY. The tract at residues 162–169 is lon protease binding; the sequence is KIHSNLYH.

The protein belongs to the SulA family. Interacts with FtsZ. Post-translationally, is rapidly cleaved and degraded by the Lon protease once DNA damage is repaired.

Component of the SOS system and an inhibitor of cell division. Accumulation of SulA causes rapid cessation of cell division and the appearance of long, non-septate filaments. In the presence of GTP, binds a polymerization-competent form of FtsZ in a 1:1 ratio, thus inhibiting FtsZ polymerization and therefore preventing it from participating in the assembly of the Z ring. This mechanism prevents the premature segregation of damaged DNA to daughter cells during cell division. The sequence is that of Cell division inhibitor SulA from Shigella boydii serotype 18 (strain CDC 3083-94 / BS512).